Here is a 687-residue protein sequence, read N- to C-terminus: Mu-like prophage FluMu transposase A (687 aa).

In terms of domain architecture, HTH Mu-type spans 8–74 (THYSVYELAN…ELLLKTTPEQ (67 aa)). Positions 398-417 (PIERAFSHGGLGDYVDKHLL) form a DNA-binding region, H-T-H motif.

In terms of biological role, this transposase is essential for integration, replication-transposition, and excision of Mu-like viral DNA. This is Mu-like prophage FluMu transposase A from Haemophilus influenzae (strain ATCC 51907 / DSM 11121 / KW20 / Rd).